A 444-amino-acid chain; its full sequence is Phosphatidate cytidylyltransferase 2 (444 aa).

Over residues 1-38 (MTELRQRVVREDAPPEDKESESEAKLDGETASDSESRA) the composition is skewed to basic and acidic residues. Positions 1-48 (MTELRQRVVREDAPPEDKESESEAKLDGETASDSESRAETAPLPTSVD) are disordered. At Ser-20 the chain carries Phosphoserine. Thr-30 carries the phosphothreonine modification. A phosphoserine mark is found at Ser-32, Ser-34, and Ser-36. Position 50 is a phosphothreonine (Thr-50). Transmembrane regions (helical) follow at residues 78–98 (MIAF…MIVM), 129–149 (WYFL…DYFF), 165–185 (HRFI…LSLV), 212–232 (LVIH…SCVI), 261–281 (GFIG…YVMS), and 339–359 (IALS…ASGF).

The protein belongs to the CDS family. In terms of assembly, homodimer. Ubiquitous. Expressed in the ganglion cell layer and inner nuclear layer of the retina.

The protein resides in the endoplasmic reticulum membrane. The catalysed reaction is a 1,2-diacyl-sn-glycero-3-phosphate + CTP + H(+) = a CDP-1,2-diacyl-sn-glycerol + diphosphate. The enzyme catalyses 1-octadecanoyl-2-(5Z,8Z,11Z,14Z-eicosatetraenoyl)-sn-glycero-3-phosphate + CTP + H(+) = 1-octadecanoyl-2-(5Z,8Z,11Z,14Z-eicosatetraenoyl)-sn-glycero-3-cytidine-5'-diphosphate + diphosphate. It catalyses the reaction 1-octadecanoyl-2-(9Z,12Z-octadecadienoyl)-sn-glycero-3-phosphate + CTP + H(+) = 1-octadecanoyl-2-(9Z,12Z-octadecadienoyl)-sn-glycero-3-cytidine-5'-diphosphate + diphosphate. It carries out the reaction 1-hexadecanoyl-2-(5Z,8Z,11Z,14Z-eicosatetraenoyl)-sn-glycero-3-phosphate + CTP + H(+) = 1-hexadecanoyl-2-(5Z,8Z,11Z,14Z-eicosatetraenoyl)-sn-glycero-3-cytidine-5'-diphosphate + diphosphate. The catalysed reaction is 1,2-di-(5Z,8Z,11Z,14Z)-eicosatetraenoyl-sn-glycero-3-phosphate + CTP + H(+) = 1,2-di-(5Z,8Z,11Z,14Z-eicosatetraenoyl)-sn-glycero-3-cytidine-5'-diphosphate + diphosphate. The enzyme catalyses 1-octadecanoyl-2-(9Z-octadecenoyl)-sn-glycero-3-phosphate + CTP + H(+) = 1-octadecanoyl-2-(9Z-octadecenoyl)-sn-glycero-3-cytidine-5'-diphosphate + diphosphate. It catalyses the reaction 1-octadecanoyl-2-(4Z,7Z,10Z,13Z,16Z,19Z-docosahexaenoyl)-sn-glycero-3-phosphate + CTP + H(+) = 1-octadecanoyl-2-(4Z,7Z,10Z,13Z,16Z,19Z-docosahexaenoyl)-sn-glycero-3-cytidine-5'-diphosphate + diphosphate. It carries out the reaction 1,2-di-(9Z,12Z-octadecadienoyl)-sn-glycero-3-phosphate + CTP + H(+) = 1,2-di-(9Z,12Z-octadecadienoyl)-sn-glycero-3-cytidine-5'-diphosphate + diphosphate. The catalysed reaction is 1,2-di-(9Z-octadecenoyl)-sn-glycero-3-phosphate + CTP + H(+) = 1,2-di-(9Z-octadecenoyl)-sn-glycero-3-cytidine-5'-diphosphate + diphosphate. It functions in the pathway phospholipid metabolism; CDP-diacylglycerol biosynthesis; CDP-diacylglycerol from sn-glycerol 3-phosphate: step 3/3. Catalyzes the conversion of phosphatidic acid (PA) to CDP-diacylglycerol (CDP-DAG), an essential intermediate in the synthesis of phosphatidylglycerol, cardiolipin and phosphatidylinositol. Exhibits specificity for the nature of the acyl chains at the sn-1 and sn-2 positions in the substrate, PA and the preferred acyl chain composition is 1-stearoyl-2-arachidonoyl-sn-phosphatidic acid. Plays an important role in regulating the growth and maturation of lipid droplets which are storage organelles at the center of lipid and energy homeostasis. The protein is Phosphatidate cytidylyltransferase 2 of Mus musculus (Mouse).